The sequence spans 243 residues: Type III pantothenate kinase (243 aa).

6 to 13 (DIGNTVAK) is an ATP binding site. Substrate contacts are provided by residues tyrosine 86 and 93 to 96 (GYDR). Residue aspartate 95 is the Proton acceptor of the active site. Aspartate 116 is a K(+) binding site. Threonine 119 contributes to the ATP binding site. Residue threonine 171 participates in substrate binding.

This sequence belongs to the type III pantothenate kinase family. In terms of assembly, homodimer. The cofactor is NH4(+). Requires K(+) as cofactor.

The protein localises to the cytoplasm. It catalyses the reaction (R)-pantothenate + ATP = (R)-4'-phosphopantothenate + ADP + H(+). It functions in the pathway cofactor biosynthesis; coenzyme A biosynthesis; CoA from (R)-pantothenate: step 1/5. Catalyzes the phosphorylation of pantothenate (Pan), the first step in CoA biosynthesis. This chain is Type III pantothenate kinase, found in Bacteroides fragilis (strain YCH46).